The primary structure comprises 298 residues: Glutamyl-Q tRNA(Asp) synthetase (298 aa).

L-glutamate contacts are provided by residues 9–13 (RFAPS) and Glu45. A 'HIGH' region motif is present at residues 12–22 (PSPTGLLHAGS). Residues Cys101, Cys103, Tyr121, and Cys125 each coordinate Zn(2+). Residues Tyr179 and Arg197 each contribute to the L-glutamate site. The short motif at 235–239 (KLSKQ) is the 'KMSKS' region element. An ATP-binding site is contributed by Lys238.

The protein belongs to the class-I aminoacyl-tRNA synthetase family. GluQ subfamily. Requires Zn(2+) as cofactor.

Catalyzes the tRNA-independent activation of glutamate in presence of ATP and the subsequent transfer of glutamate onto a tRNA(Asp). Glutamate is transferred on the 2-amino-5-(4,5-dihydroxy-2-cyclopenten-1-yl) moiety of the queuosine in the wobble position of the QUC anticodon. This Chromobacterium violaceum (strain ATCC 12472 / DSM 30191 / JCM 1249 / CCUG 213 / NBRC 12614 / NCIMB 9131 / NCTC 9757 / MK) protein is Glutamyl-Q tRNA(Asp) synthetase.